We begin with the raw amino-acid sequence, 509 residues long: SH2 domain-containing adapter protein B (509 aa).

2 disordered regions span residues 1–103 and 144–178; these read MAKW…GSSL and SGAG…EVRY. The segment at 1–410 is mediates interaction with LAT, PTK2/FAK1, JAK1 and JAK3; it reads MAKWLNKYFS…PAVPLEKQIW (410 aa). Residues 44–61 show a composition bias toward low complexity; that stretch reads VPQASSAASASCGPATAS. A compositionally biased stretch (polar residues) spans 62–79; the sequence is CFSASSGSLPDDSGSTSD. Residue S102 is modified to Phosphoserine. Residues 144 to 158 show a composition bias toward low complexity; the sequence is SGAGAAASSSSSSGS. Residue K187 forms a Glycyl lysine isopeptide (Lys-Gly) (interchain with G-Cter in SUMO2) linkage. Residues 229 to 385 form a disordered region; it reads AEESGAGKKD…APGGGFKPIK (157 aa). Basic and acidic residues-rich tracts occupy residues 233-242 and 250-262; these read GAGKKDKVTI and FDAK…KAGK. S307 and S317 each carry phosphoserine. A compositionally biased stretch (polar residues) spans 307–317; that stretch reads SVDSDSESTVS. The segment covering 319–334 has biased composition (basic and acidic residues); it reads RLRESKLPQDDDRPAD. At S388 the chain carries Phosphoserine. The region spanning 410-504 is the SH2 domain; the sequence is WYHGAISRGD…AEHLSLLYPV (95 aa).

In terms of assembly, interacts with PTPN11. Interacts with phosphorylated 'Tyr-720' of the ligand-activated receptor PDGFRA via its SH2 domain. Interacts with the ligand-activated receptors PDGFRB, FGFR1, KDR/VEGFR2, IL2RB and IL2RG. Interacts with EPS8 and V-SRC. Interacts with GRB2 and GRAP. Interacts with CD3Z. Interacts with tyrosine-phosphorylated LAT upon T-cell antigen receptor activation. Interacts with PLCG1. Interacts with ZAP70, LCP2/SLP-76, VAV1 and GRAP2. Interacts with JAK1 and JAK3. Interacts with PTK2/FAK1. Interacts with CRK/CrKII. Interacts with IRS2. Post-translationally, phosphorylated upon PDGFRA, PDGFRB, TCR, IL2 receptor, FGFR1 or VEGFR2 activation. As to expression, widely expressed.

It is found in the cytoplasm. The protein resides in the cell membrane. Its function is as follows. Adapter protein which regulates several signal transduction cascades by linking activated receptors to downstream signaling components. May play a role in angiogenesis by regulating FGFR1, VEGFR2 and PDGFR signaling. May also play a role in T-cell antigen receptor/TCR signaling, interleukin-2 signaling, apoptosis and neuronal cells differentiation by mediating basic-FGF and NGF-induced signaling cascades. May also regulate IRS1 and IRS2 signaling in insulin-producing cells. The sequence is that of SH2 domain-containing adapter protein B (SHB) from Homo sapiens (Human).